The chain runs to 212 residues: Glycerol-3-phosphate acyltransferase (212 aa).

The next 6 membrane-spanning stretches (helical) occupy residues 6-26 (IAVL…GLIL), 56-76 (LAAL…LLAH), 92-112 (LTLI…WLGF), 122-142 (LGVS…AWLL), 150-170 (SSVG…FMPA), and 171-191 (SHEI…LLLW).

It belongs to the PlsY family. As to quaternary structure, probably interacts with PlsX.

It is found in the cell inner membrane. It carries out the reaction an acyl phosphate + sn-glycerol 3-phosphate = a 1-acyl-sn-glycero-3-phosphate + phosphate. Its pathway is lipid metabolism; phospholipid metabolism. Functionally, catalyzes the transfer of an acyl group from acyl-phosphate (acyl-PO(4)) to glycerol-3-phosphate (G3P) to form lysophosphatidic acid (LPA). This enzyme utilizes acyl-phosphate as fatty acyl donor, but not acyl-CoA or acyl-ACP. In Zymomonas mobilis subsp. mobilis (strain ATCC 31821 / ZM4 / CP4), this protein is Glycerol-3-phosphate acyltransferase.